Here is a 638-residue protein sequence, read N- to C-terminus: MTSTIDSDGAAESRVFEADVAKLLQMMVHSVYSDKDVFLRELISNAADACERLRYDAISDPALLADDARPQIAITIDAERRQLTVDDNGIGMSRDEMVDALGTIARSGTKAFIEQAKVEQAKSAEAGDGVTVIGQFGVGFYSAFMVADQVDVISRRAGAGEAWRWSSDGKGTFTVTPADESEAPARGTRVMLHLTEDAKGYTDRLKLEQIVREQSGHVPVPIVLVEQPGAAPTEIADGAALWTKPRGEIGTSEYVDFYRSVAGHFDEPALTVHFRAEGRQEFTALLFVPQTRSFDLFETDRKGPIKLYVKRVFITDDADLLPRYLRFVRGVVDSADLPLNISREMIQESPILAAIKKSITGRVLSELEKLAEKDAQAYGKVWEAFGPMFKEGIYDAADRRDAILSLCRFRTTAGSLRSLKDYVGALKDNQTSIYYLAGQDAARLEASPHLEGFRARGVEVLLLSDPVDSFWVTSAPSFEGKPFKSVTQGDTDLAAIPRVDASAETLQEVSASVTEFLAFLKTTLADLVSDVRSSERLTDSPVCLIAAESGPDRQLEKILVGVGQLTGASKPVLEVNPRHPLIASLAALGDGDRAFKEDTARMLLDDARVLDGDRPSDALEFSRRLARIVERGLRGSTA.

The interval 1–343 (MTSTIDSDGA…SADLPLNISR (343 aa)) is a; substrate-binding. Positions 344–557 (EMIQESPILA…ESGPDRQLEK (214 aa)) are b. Positions 558–638 (ILVGVGQLTG…VERGLRGSTA (81 aa)) are c.

This sequence belongs to the heat shock protein 90 family. Homodimer.

Its subcellular location is the cytoplasm. Functionally, molecular chaperone. Has ATPase activity. In Nitrobacter hamburgensis (strain DSM 10229 / NCIMB 13809 / X14), this protein is Chaperone protein HtpG.